Consider the following 188-residue polypeptide: Elongation factor P-like protein (188 aa).

It belongs to the elongation factor P family.

The polypeptide is Elongation factor P-like protein (Vibrio vulnificus (strain CMCP6)).